A 570-amino-acid polypeptide reads, in one-letter code: Protein mom-5 (570 aa).

An N-terminal signal peptide occupies residues 1-16; it reads MHRHILILFLFGCLSA. Topologically, residues 17 to 230 are extracellular; that stretch reads DQRLSSTSIS…FDGRVRRILR (214 aa). One can recognise an FZ domain in the interval 32-148; sequence STTRKCEHIT…FPVTDLCVGK (117 aa). Disulfide bonds link Cys37-Cys98, Cys45-Cys91, Cys82-Cys119, Cys108-Cys145, and Cys112-Cys136. N-linked (GlcNAc...) asparagine glycosylation occurs at Asn51. Asn149 is a glycosylation site (N-linked (GlcNAc...) asparagine). The chain crosses the membrane as a helical span at residues 231-251; that stretch reads IWTAAWSVACFVCSLFTLVTF. Residues 252 to 264 are Cytoplasmic-facing; that stretch reads LVDLSRFAYPVRP. A helical membrane pass occupies residues 265-285; sequence ILYLAFCYLAISTVYMIGVVG. Over 286 to 319 the chain is Extracellular; the sequence is EDGFACGTYGSTPTTLVTQGGENVGCSALAVVHY. The chain crosses the membrane as a helical span at residues 320–340; the sequence is FFFMSSCAWWLVLCLAWFLAA. At 341 to 348 the chain is on the cytoplasmic side; it reads NLKWGAES. A helical membrane pass occupies residues 349-369; that stretch reads IAALSPYFHAMCWGVPAVLSV. The Extracellular segment spans residues 370–395; that stretch reads TVLVTNSVDGDVFTGICSVGNLNPSA. Residues 396 to 416 form a helical membrane-spanning segment; that stretch reads LVYFFFTPIVVSLALGAVLLV. At 417–449 the chain is on the cytoplasmic side; that stretch reads CGIWSMIRIRSYIKLQHADVERNISKLEKLMLR. Residues 450-470 traverse the membrane as a helical segment; that stretch reads IGAFAIMYSLPTAMNAAIMWY. Residues 471 to 515 are Extracellular-facing; the sequence is QAVNMPAWLEGWLHHRCVRLQDRELFGFTYPVDDCPMDPKVAAPE. A helical transmembrane segment spans residues 516–536; sequence IIVFLLKYVSQLVVGITCAIW. At 537–570 the chain is on the cytoplasmic side; the sequence is VVSSKTLSSYHKAYLALSSRSPTVPAHVDQVNMR.

The protein belongs to the G-protein coupled receptor Fz/Smo family.

Its subcellular location is the cell membrane. The protein localises to the early endosome. Its function is as follows. Receptor for Wnt proteins. Most frizzled receptors are coupled to the beta-catenin canonical signaling pathway, which leads to the activation of disheveled proteins, inhibition of gsk-3 kinase, nuclear accumulation of beta-catenin and activation of Wnt target genes. A second signaling pathway involving PKC and calcium fluxes has been seen for some family members, but it is not yet clear if it represents a distinct pathway or if it can be integrated in the canonical pathway, as pkc seems to be required for Wnt-mediated inactivation of gsk-3 kinase. Both pathways seem to involve interactions with G-proteins. Required in embryonic development for the correct positioning and orientation of the mitotic spindles and division planes in blastomere cells. During early embryonic cell divisions, directs the asymmetric positioning of transcription factors such as pop-1 and dsh-2 in daughter cells in order to determine cell fate specification. Acts redundantly with other Wnt receptors such as lin-17 to control vulval precursor cell specification and also the polarity of different cell types including distal tip cells, seam cells, AVG interneurons and P-cells and their descendants. Plays a role in the migration of cell types including distal tip cells and the QR neuroblast descendants, QR.p and QR.pa during larval development. Negatively regulates the unc-6/Netrin receptors unc-5 and unc-40 to control distal tip cell polarity and migration. Acts through ced-5/DOCK180 and ced-10/Rac to control both distal tip cell migration and the phagocytic clearance of apoptotic cell corpses. Furthermore, it is also required for the migration and axon guidance of the different neuronal cell types including CAN, ALM, HSN and the two mechanosensory neurons AVM and PVM. Mediates Wnt receptor cfz-2 in directing ALM migration, but may also act redundantly with the Wnt receptors cfz-2 and mig-1 to direct the migration of other neuronal cell types including CAN and HSN. Mediates Wnt ligand egl-20 in the control of the anterior-posterior axon guidance of AVM and PVM neurons. The sequence is that of Protein mom-5 from Caenorhabditis elegans.